The following is a 123-amino-acid chain: MALSKEDILTWLEEAKTSEVVELITAIEEKFGVTAAAVAVAAGSGPASVDAEEQTEFDVMLMSFGDSKINVIKEVRAVTGLGLGEAKALVEAAPKAIKEGVSKADAEDIKKKLEAVGAKVEIK.

It belongs to the bacterial ribosomal protein bL12 family. As to quaternary structure, homodimer. Part of the ribosomal stalk of the 50S ribosomal subunit. Forms a multimeric L10(L12)X complex, where L10 forms an elongated spine to which 2 to 4 L12 dimers bind in a sequential fashion. Binds GTP-bound translation factors.

Forms part of the ribosomal stalk which helps the ribosome interact with GTP-bound translation factors. Is thus essential for accurate translation. This Borrelia turicatae (strain 91E135) protein is Large ribosomal subunit protein bL12.